We begin with the raw amino-acid sequence, 292 residues long: Homoserine kinase (292 aa).

84–94 (PISRGLGSSSA) is an ATP binding site.

This sequence belongs to the GHMP kinase family. Homoserine kinase subfamily.

The protein localises to the cytoplasm. It carries out the reaction L-homoserine + ATP = O-phospho-L-homoserine + ADP + H(+). Its pathway is amino-acid biosynthesis; L-threonine biosynthesis; L-threonine from L-aspartate: step 4/5. Its function is as follows. Catalyzes the ATP-dependent phosphorylation of L-homoserine to L-homoserine phosphate. This chain is Homoserine kinase, found in Sulfurovum sp. (strain NBC37-1).